Reading from the N-terminus, the 57-residue chain is COP9 signalosome complex subunit 9 (57 aa).

Position 26 is a phosphothreonine (Thr-26).

Belongs to the CSN9 family. Component of the CSN complex, composed of COPS1/GPS1, COPS2, COPS3, COPS4, COPS5, COPS6, COPS7 (COPS7A or COPS7B), COPS8 and COPS9. In the complex, it interacts directly with COPS3, COPS5 and COPS6.

The protein resides in the nucleus. It is found in the cytoplasm. The protein localises to the nucleoplasm. Functionally, component of the COP9 signalosome complex (CSN), a complex involved in various cellular and developmental processes. The CSN complex is an essential regulator of the ubiquitin (Ubl) conjugation pathway by mediating the deneddylation of the cullin subunits of SCF-type E3 ligase complexes, leading to decrease the Ubl ligase activity of SCF-type complexes such as SCF, CSA or DDB2. The complex is also involved in phosphorylation of p53/TP53, c-jun/JUN, IkappaBalpha/NFKBIA, ITPK1 and IRF8/ICSBP, possibly via its association with CK2 and PKD kinases. CSN-dependent phosphorylation of TP53 and JUN promotes and protects degradation by the Ubl system, respectively. Plays a role in cell proliferation. This is COP9 signalosome complex subunit 9 from Mus musculus (Mouse).